A 181-amino-acid polypeptide reads, in one-letter code: Transcription factor bHLH167 (181 aa).

The interval 1 to 22 (MGRAREIGEGNSSSLREQRNLR) is disordered. The 50-residue stretch at 14–63 (SLREQRNLREKDRRMRMKHLFSILSSHVSPTRKLPVPHLIDQATSYMIQL) folds into the bHLH domain.

Belongs to the bHLH protein family.

It localises to the nucleus. The protein is Transcription factor bHLH167 of Arabidopsis thaliana (Mouse-ear cress).